The following is a 448-amino-acid chain: Adenylosuccinate synthetase (448 aa).

Residues 22-28 (GDEGKGK) and 50-52 (GHT) each bind GTP. The active-site Proton acceptor is D23. The Mg(2+) site is built by D23 and G50. IMP contacts are provided by residues 23–26 (DEGK), 48–51 (NAGH), T139, R153, Q234, T249, and R321. H51 functions as the Proton donor in the catalytic mechanism. 317–323 (SVTGRPR) is a binding site for substrate. GTP-binding positions include R323, 349 to 351 (KLD), and 431 to 433 (STG).

This sequence belongs to the adenylosuccinate synthetase family. In terms of assembly, homodimer. Requires Mg(2+) as cofactor.

The protein resides in the cytoplasm. The catalysed reaction is IMP + L-aspartate + GTP = N(6)-(1,2-dicarboxyethyl)-AMP + GDP + phosphate + 2 H(+). Its pathway is purine metabolism; AMP biosynthesis via de novo pathway; AMP from IMP: step 1/2. Its function is as follows. Plays an important role in the de novo pathway of purine nucleotide biosynthesis. Catalyzes the first committed step in the biosynthesis of AMP from IMP. The chain is Adenylosuccinate synthetase from Paraburkholderia phytofirmans (strain DSM 17436 / LMG 22146 / PsJN) (Burkholderia phytofirmans).